The following is a 394-amino-acid chain: MNGRFGKFGGQYVPETLMNAINELEVEFNKAINDEKFMMEYKYYLEKYVGRETPLYFAENMTKNLGGAKIYLKREDLNHTGSHKLNNALGQVLLAKRMGKKRVIAETGAGQHGVATATAAALFGLECEVFMGAEDVERQALNVFRMKILGAKVNSVKSGTNTLKDAINAAMRDWVTNIDNTYYVIGSVMGPHPYPTIVKDFQKIIGEEARKQILKAEGRLPDYVVACVGGGSNSMGIFYPFIKDEGVKLIGVEAAGLGIDTPMHAATLTKGSVGIIHGMMTYVLQDEDGQITPAYSVSAGLDYPGVGPQHSYLKEKERASYEAVTDKEALKAFLYLSEKEGIIPALESSHAVAYAMKLAPSLSKDEIVIINLSGRGDKDVNTVMKNMEENKNGK.

K84 carries the N6-(pyridoxal phosphate)lysine modification.

This sequence belongs to the TrpB family. As to quaternary structure, tetramer of two alpha and two beta chains. Pyridoxal 5'-phosphate serves as cofactor.

It carries out the reaction (1S,2R)-1-C-(indol-3-yl)glycerol 3-phosphate + L-serine = D-glyceraldehyde 3-phosphate + L-tryptophan + H2O. It participates in amino-acid biosynthesis; L-tryptophan biosynthesis; L-tryptophan from chorismate: step 5/5. Its function is as follows. The beta subunit is responsible for the synthesis of L-tryptophan from indole and L-serine. The sequence is that of Tryptophan synthase beta chain from Clostridium acetobutylicum (strain ATCC 824 / DSM 792 / JCM 1419 / IAM 19013 / LMG 5710 / NBRC 13948 / NRRL B-527 / VKM B-1787 / 2291 / W).